The primary structure comprises 197 residues: Ribonuclease HII (197 aa).

The RNase H type-2 domain occupies 9-197; sequence KLIAGVDEVG…APVKKALEQF (189 aa). Asp-15, Glu-16, and Asp-107 together coordinate a divalent metal cation.

It belongs to the RNase HII family. Mn(2+) is required as a cofactor. The cofactor is Mg(2+).

It is found in the cytoplasm. It catalyses the reaction Endonucleolytic cleavage to 5'-phosphomonoester.. In terms of biological role, endonuclease that specifically degrades the RNA of RNA-DNA hybrids. The protein is Ribonuclease HII of Haemophilus influenzae (strain PittEE).